Consider the following 409-residue polypeptide: Shaggy-related protein kinase gamma (409 aa).

A2 bears the N-acetylalanine mark. The 285-residue stretch at 73 to 357 folds into the Protein kinase domain; sequence YMAERVVGHG…ALDSLVHPFF (285 aa). ATP contacts are provided by residues 79–87 and K102; that span reads VGHGSFGVV. D198 functions as the Proton acceptor in the catalytic mechanism. Y233 is subject to Phosphotyrosine.

The protein belongs to the protein kinase superfamily. CMGC Ser/Thr protein kinase family. GSK-3 subfamily. As to quaternary structure, binds to KIB1. Component of a complex made of POLAR, BASL, ASK7/BIN2 and ASK3/SK12. Binds to POLAR and BASL. Autophosphorylated mainly on threonine and serine residues. Roots, shoots and leaves.

Its subcellular location is the cytoplasm. It localises to the cell cortex. The catalysed reaction is L-seryl-[protein] + ATP = O-phospho-L-seryl-[protein] + ADP + H(+). It carries out the reaction L-threonyl-[protein] + ATP = O-phospho-L-threonyl-[protein] + ADP + H(+). Its function is as follows. May mediate extracellular signals to regulate transcription in differentiating cells. Probably involved first at the cortical polarity site, to restrict MAPK signaling and promote asymmetric cell division (ACD), and second in the nucleus of stomatal lineage ground cells (SLGCs) or meristemoids, to limit cell division and to promote differentiation into pavement or stomatal guard cells, respectively. Phosphorylate YDA and SPCH in vitro. The sequence is that of Shaggy-related protein kinase gamma from Arabidopsis thaliana (Mouse-ear cress).